The primary structure comprises 1016 residues: C2 domain-containing protein 5 (1016 aa).

One can recognise a C2 domain in the interval 1 to 109 (MPGKLKVKIV…EAATVISGWF (109 aa)). Residues D19, D26, D76, D78, S81, and D84 each coordinate Ca(2+). S197 is subject to Phosphoserine; by PKB/AKT2. Phosphoserine occurs at positions 200 and 260. A disordered region spans residues 265-330 (LKEIPFNEDP…SGSAGKEGGP (66 aa)). A compositionally biased stretch (polar residues) spans 274-289 (PNPNTHSSGPSTPLKN). Residues 290–318 (QTYSFSPSKSYSRQSSSSDTDLSLTPKTG) show a composition bias toward low complexity. Residues S293, S295, S304, S305, and S306 each carry the phosphoserine modification. T317 is subject to Phosphothreonine. Residues 319–328 (MGSGSAGKEG) show a composition bias toward gly residues. S323 is modified (phosphoserine). A Phosphothreonine modification is found at T601. Residues 636–668 (VSEEMIGSPIPEPRQRSRLLRSQSESSDEVTEL) form a disordered region. Phosphoserine occurs at positions 643, 657, 659, 661, and 662. Phosphothreonine is present on T666. Phosphoserine is present on residues S671, S817, and S869.

Requires Ca(2+) as cofactor. Post-translationally, phosphorylated on Ser-197 by active myristoylated kinase AKT2; insulin-stimulated phosphorylation by AKT2 regulates SLC2A4/GLUT4 translocation into the plasma membrane. As to expression, expressed in liver, muscle and fat.

It localises to the cytoplasmic vesicle membrane. The protein localises to the cytoplasm. It is found in the cell cortex. The protein resides in the cell membrane. Its subcellular location is the cell projection. It localises to the ruffle. In terms of biological role, required for insulin-stimulated glucose transport and glucose transporter SLC2A4/GLUT4 translocation from intracellular glucose storage vesicle (GSV) to the plasma membrane (PM) in adipocytes. Binds phospholipid membranes in a calcium-dependent manner and is necessary for the optimal membrane fusion between SLC2A4/GLUT4 GSV and the PM. The sequence is that of C2 domain-containing protein 5 (C2cd5) from Mus musculus (Mouse).